Here is a 556-residue protein sequence, read N- to C-terminus: Formate--tetrahydrofolate ligase (556 aa).

65-72 contributes to the ATP binding site; that stretch reads TPAGEGKS.

The protein belongs to the formate--tetrahydrofolate ligase family.

The catalysed reaction is (6S)-5,6,7,8-tetrahydrofolate + formate + ATP = (6R)-10-formyltetrahydrofolate + ADP + phosphate. The protein operates within one-carbon metabolism; tetrahydrofolate interconversion. The polypeptide is Formate--tetrahydrofolate ligase (Clostridium novyi (strain NT)).